The primary structure comprises 655 residues: Alpha-amylase (655 aa).

Catalysis depends on Glu123, which acts as the Nucleophile. Asp214 acts as the Proton donor in catalysis.

The protein belongs to the glycosyl hydrolase 57 family.

The enzyme catalyses Endohydrolysis of (1-&gt;4)-alpha-D-glucosidic linkages in polysaccharides containing three or more (1-&gt;4)-alpha-linked D-glucose units.. The sequence is that of Alpha-amylase (amyA) from Pyrococcus abyssi (strain GE5 / Orsay).